The following is a 329-amino-acid chain: DNA-directed RNA polymerase subunit alpha (329 aa).

Residues 1-235 (MLGSVTDFLK…EQLDAFVDLR (235 aa)) form an alpha N-terminal domain (alpha-NTD) region. Residues 249–329 (FDPILLRPVD…NWPPASLADN (81 aa)) form an alpha C-terminal domain (alpha-CTD) region.

The protein belongs to the RNA polymerase alpha chain family. Homodimer. The RNAP catalytic core consists of 2 alpha, 1 beta, 1 beta' and 1 omega subunit. When a sigma factor is associated with the core the holoenzyme is formed, which can initiate transcription.

It catalyses the reaction RNA(n) + a ribonucleoside 5'-triphosphate = RNA(n+1) + diphosphate. Its function is as follows. DNA-dependent RNA polymerase catalyzes the transcription of DNA into RNA using the four ribonucleoside triphosphates as substrates. This is DNA-directed RNA polymerase subunit alpha from Tolumonas auensis (strain DSM 9187 / NBRC 110442 / TA 4).